The primary structure comprises 885 residues: Alpha-actinin (885 aa).

An actin-binding region spans residues 1–242 (MTQDGYMQQE…IMTYVSWYYH (242 aa)). 2 consecutive Calponin-homology (CH) domains span residues 26 to 130 (KQQR…LRFA) and 139 to 245 (MTAK…HAFH). Spectrin repeat units lie at residues 270-377 (LMEE…EEWL), 389-494 (HLAQ…ALDE), 508-614 (EFAK…HTLQ), and 626-727 (LRRQ…NEVE). EF-hand domains follow at residues 741 to 776 (EQLNEFRTSFNHFDKKRTGRLAPEEFKSCLVSLGYN) and 780 to 815 (DDRPEFRRILAIVDPNKTGYVHFDAFLDFMTREYTD). Ca(2+) is bound by residues D754, T758, R760, E765, D793, N795, T797, and Y799.

It belongs to the alpha-actinin family. As to quaternary structure, homodimer; antiparallel.

F-actin cross-linking protein which is thought to anchor actin to a variety of intracellular structures. This is a bundling protein. The sequence is that of Alpha-actinin from Dermatophagoides farinae (American house dust mite).